The chain runs to 610 residues: Elongation factor 4 (610 aa).

The region spanning 11–193 (KYIRNFSIVA…QIVTKIPAPA (183 aa)) is the tr-type G domain. GTP-binding positions include 23–28 (DHGKST) and 140–143 (NKID).

Belongs to the TRAFAC class translation factor GTPase superfamily. Classic translation factor GTPase family. LepA subfamily.

The protein resides in the cell membrane. It catalyses the reaction GTP + H2O = GDP + phosphate + H(+). Its function is as follows. Required for accurate and efficient protein synthesis under certain stress conditions. May act as a fidelity factor of the translation reaction, by catalyzing a one-codon backward translocation of tRNAs on improperly translocated ribosomes. Back-translocation proceeds from a post-translocation (POST) complex to a pre-translocation (PRE) complex, thus giving elongation factor G a second chance to translocate the tRNAs correctly. Binds to ribosomes in a GTP-dependent manner. This chain is Elongation factor 4, found in Levilactobacillus brevis (strain ATCC 367 / BCRC 12310 / CIP 105137 / JCM 1170 / LMG 11437 / NCIMB 947 / NCTC 947) (Lactobacillus brevis).